We begin with the raw amino-acid sequence, 428 residues long: Serine--tRNA ligase (428 aa).

Residue 235-237 coordinates L-serine; that stretch reads TAE. An ATP-binding site is contributed by 266–268; the sequence is RSE. Position 289 (E289) interacts with L-serine. Position 353–356 (353–356) interacts with ATP; the sequence is EISS. Position 389 (S389) interacts with L-serine.

It belongs to the class-II aminoacyl-tRNA synthetase family. Type-1 seryl-tRNA synthetase subfamily. As to quaternary structure, homodimer. The tRNA molecule binds across the dimer.

It is found in the cytoplasm. The catalysed reaction is tRNA(Ser) + L-serine + ATP = L-seryl-tRNA(Ser) + AMP + diphosphate + H(+). The enzyme catalyses tRNA(Sec) + L-serine + ATP = L-seryl-tRNA(Sec) + AMP + diphosphate + H(+). Its pathway is aminoacyl-tRNA biosynthesis; selenocysteinyl-tRNA(Sec) biosynthesis; L-seryl-tRNA(Sec) from L-serine and tRNA(Sec): step 1/1. In terms of biological role, catalyzes the attachment of serine to tRNA(Ser). Is also able to aminoacylate tRNA(Sec) with serine, to form the misacylated tRNA L-seryl-tRNA(Sec), which will be further converted into selenocysteinyl-tRNA(Sec). This is Serine--tRNA ligase from Shewanella woodyi (strain ATCC 51908 / MS32).